We begin with the raw amino-acid sequence, 659 residues long: Exoribonuclease 2 (659 aa).

Positions 189 to 531 (RENLTALHFV…NHRLIKAVLA (343 aa)) constitute an RNB domain. An S1 motif domain is found at 576 to 658 (NAEFEAEVQD…ATRSIVGEIL (83 aa)).

Belongs to the RNR ribonuclease family. RNase II subfamily.

The protein localises to the cytoplasm. The enzyme catalyses Exonucleolytic cleavage in the 3'- to 5'-direction to yield nucleoside 5'-phosphates.. Involved in mRNA degradation. Hydrolyzes single-stranded polyribonucleotides processively in the 3' to 5' direction. This is Exoribonuclease 2 from Haemophilus influenzae (strain PittGG).